The chain runs to 201 residues: 3-isopropylmalate dehydratase small subunit (201 aa).

This sequence belongs to the LeuD family. LeuD type 1 subfamily. In terms of assembly, heterodimer of LeuC and LeuD.

It catalyses the reaction (2R,3S)-3-isopropylmalate = (2S)-2-isopropylmalate. The protein operates within amino-acid biosynthesis; L-leucine biosynthesis; L-leucine from 3-methyl-2-oxobutanoate: step 2/4. Its function is as follows. Catalyzes the isomerization between 2-isopropylmalate and 3-isopropylmalate, via the formation of 2-isopropylmaleate. This chain is 3-isopropylmalate dehydratase small subunit, found in Rhodopseudomonas palustris (strain BisA53).